The sequence spans 512 residues: Cytochrome P450 98A1 (512 aa).

Residues 3–23 (ASLLLSVALAVVLIPLSLALL) traverse the membrane as a helical segment. A heme-binding site is contributed by Cys441.

Belongs to the cytochrome P450 family. It depends on heme as a cofactor.

It localises to the membrane. The polypeptide is Cytochrome P450 98A1 (CYP98A1) (Sorghum bicolor (Sorghum)).